The sequence spans 761 residues: Phosphoribosylformylglycinamidine synthase subunit PurL (761 aa).

His-49 is a catalytic residue. Positions 52 and 92 each coordinate ATP. Glu-94 is a Mg(2+) binding site. Residues 95-98 (SHNH) and Arg-117 each bind substrate. The active-site Proton acceptor is His-96. Asp-118 serves as a coordination point for Mg(2+). Gln-241 is a binding site for substrate. Asp-269 lines the Mg(2+) pocket. Position 318-320 (318-320 (ESQ)) interacts with substrate. Residues Asn-502 and Gly-539 each coordinate ATP. Residue Asn-540 participates in Mg(2+) binding. Ser-542 is a binding site for substrate.

This sequence belongs to the FGAMS family. In terms of assembly, monomer. Part of the FGAM synthase complex composed of 1 PurL, 1 PurQ and 2 PurS subunits.

The protein resides in the cytoplasm. The enzyme catalyses N(2)-formyl-N(1)-(5-phospho-beta-D-ribosyl)glycinamide + L-glutamine + ATP + H2O = 2-formamido-N(1)-(5-O-phospho-beta-D-ribosyl)acetamidine + L-glutamate + ADP + phosphate + H(+). It functions in the pathway purine metabolism; IMP biosynthesis via de novo pathway; 5-amino-1-(5-phospho-D-ribosyl)imidazole from N(2)-formyl-N(1)-(5-phospho-D-ribosyl)glycinamide: step 1/2. Its function is as follows. Part of the phosphoribosylformylglycinamidine synthase complex involved in the purines biosynthetic pathway. Catalyzes the ATP-dependent conversion of formylglycinamide ribonucleotide (FGAR) and glutamine to yield formylglycinamidine ribonucleotide (FGAM) and glutamate. The FGAM synthase complex is composed of three subunits. PurQ produces an ammonia molecule by converting glutamine to glutamate. PurL transfers the ammonia molecule to FGAR to form FGAM in an ATP-dependent manner. PurS interacts with PurQ and PurL and is thought to assist in the transfer of the ammonia molecule from PurQ to PurL. The sequence is that of Phosphoribosylformylglycinamidine synthase subunit PurL from Chlorobium chlorochromatii (strain CaD3).